The primary structure comprises 450 residues: Phosphoglucosamine mutase (450 aa).

Catalysis depends on Ser101, which acts as the Phosphoserine intermediate. Mg(2+) is bound by residues Ser101, Asp240, Asp242, and Asp244. At Ser101 the chain carries Phosphoserine.

This sequence belongs to the phosphohexose mutase family. Mg(2+) is required as a cofactor. Activated by phosphorylation.

It carries out the reaction alpha-D-glucosamine 1-phosphate = D-glucosamine 6-phosphate. Catalyzes the conversion of glucosamine-6-phosphate to glucosamine-1-phosphate. The chain is Phosphoglucosamine mutase from Streptococcus sanguinis (strain SK36).